A 141-amino-acid chain; its full sequence is Hemoglobin subunit alpha (141 aa).

One can recognise a Globin domain in the interval 1 to 141 (VLSAKDKTNI…VSTVLTSKYR (141 aa)). Ser-3 carries the phosphoserine modification. Lys-7 bears the N6-succinyllysine mark. Thr-8 is subject to Phosphothreonine. At Lys-16 the chain carries N6-acetyllysine; alternate. An N6-succinyllysine; alternate modification is found at Lys-16. At Tyr-24 the chain carries Phosphotyrosine. Lys-40 carries the N6-succinyllysine modification. A Phosphoserine modification is found at Ser-49. His-58 lines the O2 pocket. His-87 is a heme b binding site. Residue Ser-102 is modified to Phosphoserine. Thr-108 bears the Phosphothreonine mark. Phosphoserine is present on residues Ser-124 and Ser-131. 2 positions are modified to phosphothreonine: Thr-134 and Thr-137. Ser-138 is subject to Phosphoserine.

This sequence belongs to the globin family. As to quaternary structure, heterotetramer of two alpha chains and two beta chains. Red blood cells.

Its function is as follows. Involved in oxygen transport from the lung to the various peripheral tissues. Functionally, hemopressin acts as an antagonist peptide of the cannabinoid receptor CNR1. Hemopressin-binding efficiently blocks cannabinoid receptor CNR1 and subsequent signaling. This is Hemoglobin subunit alpha (HBA) from Mesocricetus auratus (Golden hamster).